A 422-amino-acid chain; its full sequence is La-related protein 6A (422 aa).

Residues M1–D94 form a disordered region. Residues V48 to E61 show a composition bias toward low complexity. Basic and acidic residues predominate over residues D73 to N89. One can recognise an HTH La-type RNA-binding domain in the interval V97–R188. Positions F193–Q283 constitute an RRM domain. A disordered region spans residues G286 to V422. Basic and acidic residues predominate over residues R295–G348.

It localises to the nucleus. Functionally, transcriptional regulator. The protein is La-related protein 6A (LARP6A) of Arabidopsis thaliana (Mouse-ear cress).